The sequence spans 98 residues: N(2)-fixation sustaining protein CowN (98 aa).

This sequence belongs to the CowN family.

Is required to sustain N(2)-dependent growth in the presence of low levels of carbon monoxide (CO). Probably acts by protecting the N(2) fixation ability of the nitrogenase complex, which is inactivated in the presence of CO. The chain is N(2)-fixation sustaining protein CowN from Trichlorobacter lovleyi (strain ATCC BAA-1151 / DSM 17278 / SZ) (Geobacter lovleyi).